Reading from the N-terminus, the 282-residue chain is Transmembrane protein 41B (282 aa).

The segment at 1–36 is disordered; sequence MAKKRAGNRETESSPLVEQEPRPSKETPVPKGAQSP. The next 6 helical transmembrane spans lie at 43-63, 102-122, 138-160, 188-208, 216-236, and 251-271; these read MSIL…YLVF, TQVL…AIPG, LALF…LSYL, LINY…FINI, PLGV…FVAI, and AVSW…ILPV. Residues 131 to 242 are VTT domain; required for its function in autophagy; the sequence is GYLYPFPLAL…FVAINAGTTL (112 aa).

This sequence belongs to the TMEM41 family.

The protein localises to the endoplasmic reticulum membrane. It is found in the endomembrane system. The enzyme catalyses a 1,2-diacyl-sn-glycero-3-phospho-L-serine(in) = a 1,2-diacyl-sn-glycero-3-phospho-L-serine(out). It catalyses the reaction cholesterol(in) = cholesterol(out). It carries out the reaction a 1,2-diacyl-sn-glycero-3-phosphocholine(in) = a 1,2-diacyl-sn-glycero-3-phosphocholine(out). The catalysed reaction is a 1,2-diacyl-sn-glycero-3-phosphoethanolamine(in) = a 1,2-diacyl-sn-glycero-3-phosphoethanolamine(out). Functionally, phospholipid scramblase involved in lipid homeostasis and membrane dynamics processes. Has phospholipid scramblase activity toward cholesterol and phosphatidylserine, as well as phosphatidylethanolamine and phosphatidylcholine. Required for autophagosome formation: participates in early stages of autophagosome biogenesis at the endoplasmic reticulum (ER) membrane by reequilibrating the leaflets of the ER as lipids are extracted by atg2 (atg2a or atg2b) to mediate autophagosome assembly. In addition to autophagy, involved in other processes in which phospholipid scramblase activity is required. Required for normal motor neuron development. The chain is Transmembrane protein 41B from Danio rerio (Zebrafish).